Reading from the N-terminus, the 201-residue chain is FMN-dependent NADH:quinone oxidoreductase (201 aa).

FMN contacts are provided by residues Ser-9 and Ser-16–Ser-18.

It belongs to the azoreductase type 1 family. In terms of assembly, homodimer. FMN is required as a cofactor.

It carries out the reaction 2 a quinone + NADH + H(+) = 2 a 1,4-benzosemiquinone + NAD(+). The catalysed reaction is N,N-dimethyl-1,4-phenylenediamine + anthranilate + 2 NAD(+) = 2-(4-dimethylaminophenyl)diazenylbenzoate + 2 NADH + 2 H(+). Its function is as follows. Quinone reductase that provides resistance to thiol-specific stress caused by electrophilic quinones. Functionally, also exhibits azoreductase activity. Catalyzes the reductive cleavage of the azo bond in aromatic azo compounds to the corresponding amines. The polypeptide is FMN-dependent NADH:quinone oxidoreductase (Mesomycoplasma hyopneumoniae (strain 232) (Mycoplasma hyopneumoniae)).